The sequence spans 445 residues: 4-hydroxyphenylpyruvate dioxygenase (445 aa).

Positions 1–11 (MGHQNAAVSEN) are enriched in polar residues. Positions 1–20 (MGHQNAAVSENQNHDDGAAS) are disordered. VOC domains lie at 46-192 (RFHH…YVSY) and 223-383 (RLDH…IFTK). Positions 226, 308, and 394 each coordinate Fe cation.

This sequence belongs to the 4HPPD family. Homodimer. Fe cation serves as cofactor.

It localises to the cytoplasm. It carries out the reaction 3-(4-hydroxyphenyl)pyruvate + O2 = homogentisate + CO2. The protein operates within amino-acid degradation; L-phenylalanine degradation; acetoacetate and fumarate from L-phenylalanine: step 3/6. It functions in the pathway cofactor biosynthesis; prenylquinone biosynthesis. Functionally, catalyzes the conversion of 4-hydroxyphenylpyruvic acid to homogentisic acid, one of the steps in tyrosine catabolism. The sequence is that of 4-hydroxyphenylpyruvate dioxygenase (HPD) from Arabidopsis thaliana (Mouse-ear cress).